The primary structure comprises 154 residues: Ribonuclease H (154 aa).

The RNase H type-1 domain occupies Glu-5–Asp-146. Mg(2+) contacts are provided by Asp-14, Glu-52, Asp-74, and Asp-138.

The protein belongs to the RNase H family. In terms of assembly, monomer. It depends on Mg(2+) as a cofactor.

It localises to the cytoplasm. It catalyses the reaction Endonucleolytic cleavage to 5'-phosphomonoester.. Endonuclease that specifically degrades the RNA of RNA-DNA hybrids. The chain is Ribonuclease H from Coxiella burnetii (strain RSA 331 / Henzerling II).